The sequence spans 123 residues: Small ribosomal subunit protein uS12 (123 aa).

A disordered region spans residues 1-28; that stretch reads MPTIQQLIRTERSKVQKKTKSPALKQCP. Position 89 is a 3-methylthioaspartic acid (Asp-89). Positions 104–123 are disordered; it reads ATGVKDRKQGRSKYGTKRPK. Positions 113-123 are enriched in basic residues; it reads GRSKYGTKRPK.

Belongs to the universal ribosomal protein uS12 family. Part of the 30S ribosomal subunit. Contacts proteins S8 and S17. May interact with IF1 in the 30S initiation complex.

With S4 and S5 plays an important role in translational accuracy. In terms of biological role, interacts with and stabilizes bases of the 16S rRNA that are involved in tRNA selection in the A site and with the mRNA backbone. Located at the interface of the 30S and 50S subunits, it traverses the body of the 30S subunit contacting proteins on the other side and probably holding the rRNA structure together. The combined cluster of proteins S8, S12 and S17 appears to hold together the shoulder and platform of the 30S subunit. This Gloeothece citriformis (strain PCC 7424) (Cyanothece sp. (strain PCC 7424)) protein is Small ribosomal subunit protein uS12.